Consider the following 239-residue polypeptide: LexA repressor (239 aa).

Residues 27–47 constitute a DNA-binding region (H-T-H motif); that stretch reads FDEMKDALDLASKSGIHRLIT. Active-site for autocatalytic cleavage activity residues include Ser-159 and Lys-197.

The protein belongs to the peptidase S24 family. As to quaternary structure, homodimer.

The catalysed reaction is Hydrolysis of Ala-|-Gly bond in repressor LexA.. Its function is as follows. Represses a number of genes involved in the response to DNA damage (SOS response), including recA and lexA. In the presence of single-stranded DNA, RecA interacts with LexA causing an autocatalytic cleavage which disrupts the DNA-binding part of LexA, leading to derepression of the SOS regulon and eventually DNA repair. The chain is LexA repressor from Rhizobium radiobacter (Agrobacterium tumefaciens).